The following is a 210-amino-acid chain: Riboflavin kinase (210 aa).

Residues 1 to 81 (MECKERRLIG…DLLRYFNIAS (81 aa)) form an H-T-H motif-like region. The segment at 82 to 210 (IRLIGRVISG…GDIVEVEILL (129 aa)) is riboflavin kinase. 91 to 96 (GLGEGA) is a binding site for CDP. Positions 120 and 122 each coordinate Mg(2+). FMN is bound by residues Thr177 and Glu185. Residue 190–193 (VKLR) participates in CDP binding.

The protein belongs to the archaeal riboflavin kinase family. The cofactor is Mg(2+).

It catalyses the reaction riboflavin + CTP = CDP + FMN + H(+). It participates in cofactor biosynthesis; FMN biosynthesis; FMN from riboflavin (CTP route): step 1/1. Catalyzes the CTP-dependent phosphorylation of riboflavin (vitamin B2) to form flavin mononucleotide (FMN). The sequence is that of Riboflavin kinase (ribK) from Pyrobaculum aerophilum (strain ATCC 51768 / DSM 7523 / JCM 9630 / CIP 104966 / NBRC 100827 / IM2).